A 375-amino-acid chain; its full sequence is 23S rRNA (uracil(747)-C(5))-methyltransferase RlmC (375 aa).

Residues Cys3, Cys11, Cys14, and Cys87 each coordinate [4Fe-4S] cluster. 4 residues coordinate S-adenosyl-L-methionine: Gln212, Phe241, Glu262, and Asn307. Cys334 acts as the Nucleophile in catalysis.

The protein belongs to the class I-like SAM-binding methyltransferase superfamily. RNA M5U methyltransferase family. RlmC subfamily.

The enzyme catalyses uridine(747) in 23S rRNA + S-adenosyl-L-methionine = 5-methyluridine(747) in 23S rRNA + S-adenosyl-L-homocysteine + H(+). Functionally, catalyzes the formation of 5-methyl-uridine at position 747 (m5U747) in 23S rRNA. This chain is 23S rRNA (uracil(747)-C(5))-methyltransferase RlmC, found in Salmonella dublin (strain CT_02021853).